The primary structure comprises 438 residues: Adenosylhomocysteinase (438 aa).

Thr-64, Asp-139, and Glu-164 together coordinate substrate. Position 165-167 (165-167 (TTT)) interacts with NAD(+). The substrate site is built by Lys-194 and Asp-198. Residues Asn-199, 228 to 233 (GYGDVG), Glu-251, Asn-286, 307 to 309 (IGH), and Asn-352 each bind NAD(+).

The protein belongs to the adenosylhomocysteinase family. NAD(+) is required as a cofactor.

It is found in the cytoplasm. It catalyses the reaction S-adenosyl-L-homocysteine + H2O = L-homocysteine + adenosine. Its pathway is amino-acid biosynthesis; L-homocysteine biosynthesis; L-homocysteine from S-adenosyl-L-homocysteine: step 1/1. In terms of biological role, may play a key role in the regulation of the intracellular concentration of adenosylhomocysteine. In Coxiella burnetii (strain RSA 493 / Nine Mile phase I), this protein is Adenosylhomocysteinase.